The chain runs to 132 residues: Small ribosomal subunit protein uS11 (132 aa).

Belongs to the universal ribosomal protein uS11 family. Part of the 30S ribosomal subunit. Interacts with proteins S7 and S18. Binds to IF-3.

Functionally, located on the platform of the 30S subunit, it bridges several disparate RNA helices of the 16S rRNA. Forms part of the Shine-Dalgarno cleft in the 70S ribosome. The protein is Small ribosomal subunit protein uS11 of Legionella pneumophila (strain Corby).